The primary structure comprises 611 residues: Probable potassium transport system protein Kup (611 aa).

13 helical membrane-spanning segments follow: residues 24 to 44 (LVFG…FLFL), 55 to 75 (VSLI…FLAM), 102 to 122 (VAVF…ECVI), 143 to 163 (LIAQ…LFLF), 175 to 195 (FGPV…ISVA), 218 to 238 (LLGF…EALF), 252 to 272 (AWGF…AYLL), 275 to 295 (TDVI…LYIP), 296 to 316 (FLLL…SGIF), 344 to 364 (IYIN…LLIF), 374 to 394 (YGLA…AIFL), 400 to 420 (LYMG…LSTV), and 423 to 443 (ITHG…IVII).

Belongs to the HAK/KUP transporter (TC 2.A.72) family.

It localises to the cell membrane. It carries out the reaction K(+)(in) + H(+)(in) = K(+)(out) + H(+)(out). Functionally, transport of potassium into the cell. Likely operates as a K(+):H(+) symporter. The protein is Probable potassium transport system protein Kup of Methanospirillum hungatei JF-1 (strain ATCC 27890 / DSM 864 / NBRC 100397 / JF-1).